Here is a 723-residue protein sequence, read N- to C-terminus: MSPPKNCAVCGDKALGYNFNAVTCESCKAFFRRNALAKKQFTCPFNQNCDITVVTRRFCQKCRLRKCLDIGMKSENIMSEEDKLIKRRKIETNRAKRRLMENGTDACDADGGEERDHKAPADSSSSNLDHYSGSQDSQSCGSADSGANGCSGRQASSPGTQVNPLQMTAEKIVDQIVSDPDRASQAINRLMRTQKEAISVMEKVISSQKDALRLVSHLIDYPGDALKIISKFMNSPFNALTVFTKFMSSPTDGVEIISKIVDSPADVVEFMQNLMHSPEDAIDIMNKFMNTPAEALRILNRILSGGGANAAQQTADRKPLLDKEPAVKPAAPAERADTVIQSMLGNSPPISPHDAAVDLQYHSPGVGEQPSTSSSHPLPYIANSPDFDLKTFMQTNYNDEPSLDSDFSINSIESVLSEVIRIEYQAFNSIQQAASRVKEEMSYGTQSTYGGCNSAANNSQPHLQQPICAPSTQQLDRELNEAEQMKLRELRLASEALYDPVDEDLSALMMGDDRIKPDDTRHNPKLLQLINLTAVAIKRLIKMAKKITAFRDMCQEDQVALLKGGCTEMMIMRSVMIYDDDRAAWKVPHTKENMGNIRTDLLKFAEGNIYEEHQKFITTFDEKWRMDENIILIMCAIVLFTSARSRVIHKDVIRLEQNSYYYLLRRYLESVYSGCEARNAFIKLIQKISDVERLNKFIINVYLNVNPSQVEPLLREIFDLKNH.

Positions 4-79 (PKNCAVCGDK…IGMKSENIMS (76 aa)) form a DNA-binding region, nuclear receptor. 2 consecutive NR C4-type zinc fingers follow at residues 7–27 (CAVCGDKALGYNFNAVTCESC) and 43–67 (CPFNQNCDITVVTRRFCQKCRLRKC). Positions 95 to 163 (AKRRLMENGT…QASSPGTQVN (69 aa)) are disordered. 2 stretches are compositionally biased toward polar residues: residues 122–142 (DSSSSNLDHYSGSQDSQSCGS) and 151–163 (SGRQASSPGTQVN). In terms of domain architecture, NR LBD spans 483 to 723 (EQMKLRELRL…LREIFDLKNH (241 aa)).

It belongs to the nuclear hormone receptor family. NR1 subfamily.

Its subcellular location is the nucleus. In terms of biological role, binds selectively to the HSP27 20E response element. This Drosophila melanogaster (Fruit fly) protein is Nuclear hormone receptor HR96 (Hr96).